The primary structure comprises 147 residues: 3-hydroxyacyl-[acyl-carrier-protein] dehydratase FabZ (147 aa).

Residue H51 is part of the active site.

This sequence belongs to the thioester dehydratase family. FabZ subfamily.

The protein resides in the cytoplasm. The catalysed reaction is a (3R)-hydroxyacyl-[ACP] = a (2E)-enoyl-[ACP] + H2O. Involved in unsaturated fatty acids biosynthesis. Catalyzes the dehydration of short chain beta-hydroxyacyl-ACPs and long chain saturated and unsaturated beta-hydroxyacyl-ACPs. This chain is 3-hydroxyacyl-[acyl-carrier-protein] dehydratase FabZ, found in Anaplasma marginale (strain Florida).